A 491-amino-acid chain; its full sequence is MGANNGKQYGSEGKGSSSISSDVSSSTDHTPTKAQKNVATSEDSDLSMRTLSTPSPALICPPNLPGFQNGRGSSTSSSSITGETVAMVHSPPPTRLTHPLIRLASRPQKEQASIDRLPDHSMVQIFSFLPTNQLCRCARVCRRWYNLAWDPRLWRTIRLTGETINVDRALKVLTRRLCQDTPNVCLMLETVTVSGCRRLTDRGLYTIAQCCPELRRLEVSGCYNISNEAVFDVVSLCPNLEHLDVSGCSKVTCISLTREASIKLSPLHGKQISIRYLDMTDCFVLEDEGLHTIAAHCTQLTHLYLRRCVRLTDEGLRYLVIYCASIKELSVSDCRFVSDFGLREIAKLESRLRYLSIAHCGRVTDVGIRYVAKYCSKLRYLNARGCEGITDHGVEYLAKNCTKLKSLDIGKCPLVSDTGLECLALNCFNLKRLSLKSCESITGQGLQIVAANCFDLQTLNVQDCEVSVEALRFVKRHCKRCVIEHTNPAFF.

Residues 1–79 (MGANNGKQYG…GRGSSTSSSS (79 aa)) are disordered. Positions 10–26 (GSEGKGSSSISSDVSSS) are enriched in low complexity. The span at 27-55 (TDHTPTKAQKNVATSEDSDLSMRTLSTPS) shows a compositional bias: polar residues. The region spanning 111-157 (QASIDRLPDHSMVQIFSFLPTNQLCRCARVCRRWYNLAWDPRLWRTI) is the F-box domain. 11 LRR repeats span residues 170 to 195 (LKVL…TVSG), 196 to 221 (CRRL…EVSG), 222 to 247 (CYNI…DVSG), 253 to 281 (CISL…DMTD), 282 to 307 (CFVL…YLRR), 308 to 333 (CVRL…SVSD), 334 to 359 (CRFV…SIAH), 360 to 385 (CGRV…NARG), 386 to 411 (CEGI…DIGK), 412 to 437 (CPLV…SLKS), and 438 to 463 (CESI…NVQD).

This sequence belongs to the FBXL7 family. In terms of assembly, part of the SCF (SKP1-CUL1-F-box) E3 ubiquitin-protein ligase complex SCF(FBXL7) composed of CUL1, SKP1, RBX1 and FBXL7. Interacts with AURKA; interaction takes place during mitosis but not in interphase. Interacts with BIRC5; this interaction allows BIRC5 to be polyubiquitinated by the SCF(FBXL7) E3 ubiquitin-protein ligase complex.

It localises to the cytoplasm. It is found in the cytoskeleton. Its subcellular location is the microtubule organizing center. The protein resides in the centrosome. Its pathway is protein modification; protein ubiquitination. In terms of biological role, substrate recognition component of a SCF (SKP1-CUL1-F-box protein) E3 ubiquitin-protein ligase complex. During mitosis, it mediates the ubiquitination and subsequent proteasomal degradation of AURKA, causing mitotic arrest. It also regulates mitochondrial function by mediating the ubiquitination and proteasomal degradation of the apoptosis inhibitor BIRC5. This Homo sapiens (Human) protein is F-box/LRR-repeat protein 7 (FBXL7).